The following is a 318-amino-acid chain: Thymidylate synthase (318 aa).

DUMP is bound by residues R25 and 180–181; that span reads RR. The active-site Nucleophile is the C200. Residues 220–223, N231, and 261–263 contribute to the dUMP site; these read RSGD and HIY. Position 223 (D223) interacts with (6R)-5,10-methylene-5,6,7,8-tetrahydrofolate. A317 is a binding site for (6R)-5,10-methylene-5,6,7,8-tetrahydrofolate.

Belongs to the thymidylate synthase family. Bacterial-type ThyA subfamily. As to quaternary structure, homodimer.

The protein localises to the cytoplasm. The catalysed reaction is dUMP + (6R)-5,10-methylene-5,6,7,8-tetrahydrofolate = 7,8-dihydrofolate + dTMP. It functions in the pathway pyrimidine metabolism; dTTP biosynthesis. Its function is as follows. Catalyzes the reductive methylation of 2'-deoxyuridine-5'-monophosphate (dUMP) to 2'-deoxythymidine-5'-monophosphate (dTMP) while utilizing 5,10-methylenetetrahydrofolate (mTHF) as the methyl donor and reductant in the reaction, yielding dihydrofolate (DHF) as a by-product. This enzymatic reaction provides an intracellular de novo source of dTMP, an essential precursor for DNA biosynthesis. This is Thymidylate synthase from Lactobacillus johnsonii (strain CNCM I-12250 / La1 / NCC 533).